The sequence spans 48 residues: U-reduvitoxin-Pr5a (48 aa).

The signal sequence occupies residues 1–19; the sequence is MRLFLIFTFIVASLASVYG. Cystine bridges form between C20-C34, C27-C39, and C33-C44.

It belongs to the venom Ptu1-like knottin family. Expressed by the venom gland.

The protein resides in the secreted. Binds reversibly and blocks P/Q-type voltage-gated calcium channels (Cav). This chain is U-reduvitoxin-Pr5a, found in Platymeris rhadamanthus (Red spot assassin bug).